The chain runs to 476 residues: Abscisic acid 8'-hydroxylase CYP707A1 (476 aa).

A helical transmembrane segment spans residues F5–F25. C422 contacts heme.

The protein belongs to the cytochrome P450 family. Requires heme as cofactor. Expressed in ovaries (specifically in ovules and placenta), sepals, petals and pedicels.

The protein resides in the membrane. The catalysed reaction is 2-cis-(+)-abscisate + reduced [NADPH--hemoprotein reductase] + O2 = (+)-8'-hydroxyabscisate + oxidized [NADPH--hemoprotein reductase] + H2O + H(+). The protein operates within plant hormone degradation; abscisic acid degradation. Involved in the oxidative degradation of abscisic acid, especially in pollinated ovaries. The protein is Abscisic acid 8'-hydroxylase CYP707A1 of Solanum lycopersicum (Tomato).